A 342-amino-acid chain; its full sequence is Polygalacturonase inhibitor 2 (342 aa).

Residues 1 to 29 form the signal peptide; sequence MTQFNIPVTMSSSLSIILVILVSLSTAHS. 2 cysteine pairs are disulfide-bonded: Cys32/Cys62 and Cys63/Cys72. A glycan (N-linked (GlcNAc...) (complex) asparagine) is linked at Asn64. LRR repeat units lie at residues 82-107, 108-132, 133-156, 157-180, 181-205, 206-228, 229-252, 253-275, 276-299, and 300-319; these read NNLDLSGLNLPKPYPIPSSLANLPYL, NFLYIGGINNLVGPIPPAIAKLTQL, HYLYITHTNVSGAIPDFLSQIKTL, VTLDFSYNALSGTLPPSISSLPNL, VGITFDGNRISGAIPDSYGSFSKLF, TSMTISRNRLTGKIPPTFANLNL, AFVDLSRNMLEGDASVLFGSDKNT, QKIHLAKNSLAFDLGKVGLSKNL, NGLDLRNNRIYGTLPQGLTQLKFL, and HSLNVSFNNLCGEIPQGGNL. Asn141 is a glycosylation site (N-linked (GlcNAc...) (complex) asparagine). The N-linked (GlcNAc...) asparagine glycan is linked to Asn303. 2 disulfides stabilise this stretch: Cys310–Cys332 and Cys334–Cys341.

The protein belongs to the polygalacturonase-inhibiting protein family. Asn-303 is not glycosylated.

It localises to the secreted. The protein resides in the cell wall. Its subcellular location is the membrane. Functionally, inhibitor of fungal polygalacturonase. It is an important factor for plant resistance to phytopathogenic fungi. Inhibits all polygalacturonases (PG) tested, with the exception of PG from F.oxysporum which was only inhibited at 60%. The chain is Polygalacturonase inhibitor 2 (PGIP2) from Phaseolus vulgaris (Kidney bean).